Consider the following 347-residue polypeptide: Tetraacyldisaccharide 4'-kinase (347 aa).

64–71 (YVGGTGKT) serves as a coordination point for ATP.

It belongs to the LpxK family.

It catalyses the reaction a lipid A disaccharide + ATP = a lipid IVA + ADP + H(+). Its pathway is glycolipid biosynthesis; lipid IV(A) biosynthesis; lipid IV(A) from (3R)-3-hydroxytetradecanoyl-[acyl-carrier-protein] and UDP-N-acetyl-alpha-D-glucosamine: step 6/6. In terms of biological role, transfers the gamma-phosphate of ATP to the 4'-position of a tetraacyldisaccharide 1-phosphate intermediate (termed DS-1-P) to form tetraacyldisaccharide 1,4'-bis-phosphate (lipid IVA). This Bordetella bronchiseptica (strain ATCC BAA-588 / NCTC 13252 / RB50) (Alcaligenes bronchisepticus) protein is Tetraacyldisaccharide 4'-kinase.